Here is a 134-residue protein sequence, read N- to C-terminus: Translation initiation factor 2 subunit beta (134 aa).

Belongs to the eIF-2-beta/eIF-5 family. Heterotrimer composed of an alpha, a beta and a gamma chain.

Functionally, eIF-2 functions in the early steps of protein synthesis by forming a ternary complex with GTP and initiator tRNA. This chain is Translation initiation factor 2 subunit beta, found in Pyrobaculum aerophilum (strain ATCC 51768 / DSM 7523 / JCM 9630 / CIP 104966 / NBRC 100827 / IM2).